Here is a 246-residue protein sequence, read N- to C-terminus: Complement C1q tumor necrosis factor-related protein 3 (246 aa).

A signal peptide spans 1-22; it reads MLWRQLIYWQLLALFFLPFCLC. A Collagen-like domain is found at 51-113; it reads GYQGPPGPPG…KGEKGYPGIP (63 aa). Residues 53–110 form a disordered region; the sequence is QGPPGPPGPPGIPGNHGNNGNNGATGHEGAKGEKGDKGDLGPRGERGQHGPKGEKGYP. The span at 55–64 shows a compositional bias: pro residues; it reads PPGPPGPPGI. Residues 65 to 74 show a composition bias toward low complexity; the sequence is PGNHGNNGNN. Residue Asn70 is glycosylated (N-linked (GlcNAc...) asparagine). A compositionally biased stretch (basic and acidic residues) spans 80 to 107; the sequence is EGAKGEKGDKGDLGPRGERGQHGPKGEK. The C1q domain occupies 113–246; it reads PPELQIAFMA…FAGFLLFETK (134 aa).

Glycosylated on Asn-70. Expressed in colon and small intestine.

It localises to the secreted. The chain is Complement C1q tumor necrosis factor-related protein 3 (C1QTNF3) from Homo sapiens (Human).